A 1227-amino-acid polypeptide reads, in one-letter code: Anion exchange protein 3 (1227 aa).

The span at 1–11 shows a compositional bias: pro residues; sequence MANGVIPPPGG. Disordered regions lie at residues 1 to 256, 286 to 312, and 428 to 497; these read MANG…DEAE, KPSRIQGGRGSPSGLAPILRRKKKKKK, and NDDK…GDGH. The Cytoplasmic segment spans residues 1–707; that stretch reads MANGVIPPPG…DLRDALHSQC (707 aa). A compositionally biased stretch (basic and acidic residues) spans 58–75; sequence DPEKPSRSYSERDFEFHR. Composition is skewed to basic residues over residues 76–97 and 104–113; these read HTSHHTHHPLSARLPPPHKLRR and RHTRRKRKKE. The segment covering 134-152 has biased composition (acidic residues); sequence AEEEEEEEEEEEGESEAEP. Residues Ser167, Ser170, Ser175, and Ser198 each carry the phosphoserine modification. Low complexity predominate over residues 194-215; the sequence is QSDQSPQRSGSSPSPRARASRI. Residue Arg294 is modified to Omega-N-methylarginine. Residues 435-448 show a composition bias toward low complexity; that stretch reads FFPRNPSSSSVNSV. Basic and acidic residues predominate over residues 480–497; the sequence is HDPDAKEKPLHMPGGDGH. Transmembrane regions (helical) follow at residues 708–730, 736–773, 793–815, and 825–846; these read VAAVLFIYFAALSPAITFGGLLG, LMGVSELIVSTAVLGVLFSLLGAQPLLVVGFSGPLLVF, VWVGLWLVVFVLALVAAEGSFLV, and IFAFLISLIFIYETFHKLYKVF. A membrane (anion exchange) region spans residues 708-1227; the sequence is VAAVLFIYFA…DEYNELHMPV (520 aa). Asn868 carries an N-linked (GlcNAc...) asparagine glycan. The chain crosses the membrane as a helical span at residues 888–905; the sequence is ALLSLILMLGTFLIAFFL. The Cytoplasmic portion of the chain corresponds to 906 to 920; sequence RKFRNSRFLGGKARR. The next 5 membrane-spanning stretches (helical) occupy residues 921–941, 975–997, 1023–1044, 1078–1123, and 1150–1186; these read IIGDFGIPISILVMVLVDYSI, PFPPWMMVAAAVPALLVLILIFM, LLLIGSLGGLCGLFGLPWLTAA, VTGV…IQLS, and MHLFTCIQLGCIALLWVVKSTAASLAFPFLLLLTVPL. Cys1160 is lipidated: S-palmitoyl cysteine.

The protein belongs to the anion exchanger (TC 2.A.31) family. As to expression, expressed in the brain.

The protein resides in the cell membrane. It carries out the reaction hydrogencarbonate(in) + chloride(out) = hydrogencarbonate(out) + chloride(in). Its activity is regulated as follows. Inhibited by 4,4'-diisothiocyanatostilbene-2,2'-disulfonic acid (DIDS). In terms of biological role, sodium-independent anion exchanger which mediates the electroneutral exchange of chloride for bicarbonate ions across the cell membrane. May be involved in the regulation of intracellular pH, and the modulation of cardiac action potential. This chain is Anion exchange protein 3 (Slc4a3), found in Mus musculus (Mouse).